The following is a 235-amino-acid chain: Alpha-S2-casein (235 aa).

The signal sequence occupies residues 1–15; the sequence is MKFFIFTCLLAVAFA. A phosphoserine mark is found at S23, S24, S25, S28, S47, S72, S73, S74, S77, S147, S149, and S168. A compositionally biased stretch (polar residues) spans 144 to 158; that stretch reads EELSTSEEPVSSSQE. Residues 144-163 are disordered; it reads EELSTSEEPVSSSQEENTKT.

It belongs to the alpha-casein family. As to expression, mammary gland specific. Secreted in milk.

It is found in the secreted. In terms of biological role, important role in the capacity of milk to transport calcium phosphate. The sequence is that of Alpha-S2-casein (CSN1S2) from Sus scrofa (Pig).